Here is a 278-residue protein sequence, read N- to C-terminus: Elongation factor Ts (278 aa).

The tract at residues 82–85 is involved in Mg(2+) ion dislocation from EF-Tu; it reads TDFV.

This sequence belongs to the EF-Ts family.

Its subcellular location is the cytoplasm. In terms of biological role, associates with the EF-Tu.GDP complex and induces the exchange of GDP to GTP. It remains bound to the aminoacyl-tRNA.EF-Tu.GTP complex up to the GTP hydrolysis stage on the ribosome. The protein is Elongation factor Ts (tsf) of Streptomyces ramocissimus.